Reading from the N-terminus, the 390-residue chain is Na(+)/H(+) antiporter NhaA 2 (390 aa).

The next 11 membrane-spanning stretches (helical) occupy residues 23–43 (IVLIACAALALLIANSPLAAA), 63–83 (LHLWINDGLMAVFFFVVGLEI), 100–120 (LPVLAAVAGMAVPALIYLAIT), 129–149 (GWAIPSATDIAFAIGVLALVG), 158–178 (LFLLTVAIVDDLGAVVVIALF), 181–201 (SGLKLAWLGASALILAALVLV), 208–228 (ALLPYLAGAVALWYTVLHSGI), 265–285 (GFVIVPLFGLANAGVALGADF), 293–313 (LGIAMGLLLGKQFGILGSILV), 331–351 (LWGIALLCGIGFTMSLFIAGL), and 362–382 (EAKLGILGGSLVSALAGLLVL).

It belongs to the NhaA Na(+)/H(+) (TC 2.A.33) antiporter family.

It is found in the cell inner membrane. The enzyme catalyses Na(+)(in) + 2 H(+)(out) = Na(+)(out) + 2 H(+)(in). In terms of biological role, na(+)/H(+) antiporter that extrudes sodium in exchange for external protons. The polypeptide is Na(+)/H(+) antiporter NhaA 2 (Novosphingobium aromaticivorans (strain ATCC 700278 / DSM 12444 / CCUG 56034 / CIP 105152 / NBRC 16084 / F199)).